Reading from the N-terminus, the 353-residue chain is CCN family member 3 (353 aa).

The first 26 residues, 1–26 (MEPGGGHSLPVLLLLLLLLLLRPSEV), serve as a signal peptide directing secretion. The IGFBP N-terminal domain occupies 29–103 (REAPCPRPCG…GGGTGICMVL (75 aa)). Cystine bridges form between cysteine 33/cysteine 59, cysteine 37/cysteine 61, cysteine 41/cysteine 62, cysteine 48/cysteine 65, cysteine 73/cysteine 87, and cysteine 79/cysteine 100. Residues 106–172 (DNCVFDGMIY…GECCEKWVCE (67 aa)) form the VWFC domain. Positions 203 to 248 (NCIEQTTEWSACSRSCGMGFSTRVTNRNQQCEMVKQTRLCMMRPCE) constitute a TSP type-1 domain. 5 cysteine pairs are disulfide-bonded: cysteine 260/cysteine 297, cysteine 277/cysteine 311, cysteine 288/cysteine 327, cysteine 291/cysteine 329, and cysteine 296/cysteine 333. Positions 260-334 (CIRTKKSMKA…NTCVCHGNCP (75 aa)) constitute a CTCK domain. Asparagine 276 is a glycosylation site (N-linked (GlcNAc...) asparagine).

The protein belongs to the CCN family.

Its subcellular location is the secreted. It is found in the cytoplasm. The protein resides in the cell junction. It localises to the gap junction. Functionally, immediate-early protein likely to play a role in cell growth regulation. This Coturnix japonica (Japanese quail) protein is CCN family member 3 (CCN3).